We begin with the raw amino-acid sequence, 151 residues long: MEKVESFELDHRKVKAPYIRKCCLLDGKCGDKVTKFDIRFLQPNKEEFGTAAMHGLEHLLAHELRAKLEGIIDLSPMGCRTGFYLSIWGDREASEIKEALEYSLEKVLEAKEIPAANDIQCGNYRDLSLFGAKEYAKEALERGFSLNIYGE.

3 residues coordinate Fe cation: His54, His58, and Cys121.

Belongs to the LuxS family. As to quaternary structure, homodimer. Fe cation serves as cofactor.

It catalyses the reaction S-(5-deoxy-D-ribos-5-yl)-L-homocysteine = (S)-4,5-dihydroxypentane-2,3-dione + L-homocysteine. Functionally, involved in the synthesis of autoinducer 2 (AI-2) which is secreted by bacteria and is used to communicate both the cell density and the metabolic potential of the environment. The regulation of gene expression in response to changes in cell density is called quorum sensing. Catalyzes the transformation of S-ribosylhomocysteine (RHC) to homocysteine (HC) and 4,5-dihydroxy-2,3-pentadione (DPD). The polypeptide is S-ribosylhomocysteine lyase (Clostridium botulinum (strain Alaska E43 / Type E3)).